Reading from the N-terminus, the 231-residue chain is 7-cyano-7-deazaguanine synthase (231 aa).

Residue 8 to 18 participates in ATP binding; that stretch reads FSGGQDSTTCL. The Zn(2+) site is built by cysteine 188, cysteine 197, cysteine 200, and cysteine 203.

This sequence belongs to the QueC family. It depends on Zn(2+) as a cofactor.

The catalysed reaction is 7-carboxy-7-deazaguanine + NH4(+) + ATP = 7-cyano-7-deazaguanine + ADP + phosphate + H2O + H(+). The protein operates within purine metabolism; 7-cyano-7-deazaguanine biosynthesis. Functionally, catalyzes the ATP-dependent conversion of 7-carboxy-7-deazaguanine (CDG) to 7-cyano-7-deazaguanine (preQ(0)). This chain is 7-cyano-7-deazaguanine synthase, found in Escherichia coli O1:K1 / APEC.